Reading from the N-terminus, the 205-residue chain is Ephrin-A1 (205 aa).

The N-terminal stretch at 1–17 (MEFLWAPLLGLCCSLAA) is a signal peptide. The Ephrin RBD domain occupies 18–161 (ADRHIVFWNS…THNPQAHVNP (144 aa)). Asparagine 26 is a glycosylation site (N-linked (GlcNAc...) asparagine). Cystine bridges form between cysteine 51–cysteine 92 and cysteine 80–cysteine 140. Serine 182 is lipidated: GPI-anchor amidated serine. A propeptide spans 183 to 205 (AAPRLFPLVWAVLLLPLLLLQSQ) (removed in mature form).

The protein belongs to the ephrin family. Monomer. Homodimer. Forms heterodimers with EPHA2. Binds to the receptor tyrosine kinases EPHA2, EPHA3, EPHA4, EPHA5, EPHA6 and EPHA7. Also binds with low affinity to EPHA1. Undergoes proteolysis by a metalloprotease to give rise to a soluble monomeric form. Post-translationally, N-Glycosylation is required for binding to EPHA2 receptor and inducing its internalization. In terms of tissue distribution, expressed in myogenic progenitor cells.

It is found in the cell membrane. The protein resides in the secreted. In terms of biological role, cell surface GPI-bound ligand for Eph receptors, a family of receptor tyrosine kinases which are crucial for migration, repulsion and adhesion during neuronal, vascular and epithelial development. Binds promiscuously Eph receptors residing on adjacent cells, leading to contact-dependent bidirectional signaling into neighboring cells. Plays an important role in angiogenesis and tumor neovascularization. The recruitment of VAV2, VAV3 and PI3-kinase p85 subunit by phosphorylated EPHA2 is critical for EFNA1-induced RAC1 GTPase activation and vascular endothelial cell migration and assembly. Exerts anti-oncogenic effects in tumor cells through activation and down-regulation of EPHA2. Activates EPHA2 by inducing tyrosine phosphorylation which leads to its internalization and degradation. Acts as a negative regulator in the tumorigenesis of gliomas by down-regulating EPHA2 and FAK. Can evoke collapse of embryonic neuronal growth cone and regulates dendritic spine morphogenesis. The protein is Ephrin-A1 (Efna1) of Mus musculus (Mouse).